We begin with the raw amino-acid sequence, 197 residues long: Dermorphin-1 (197 aa).

An N-terminal signal peptide occupies residues 1 to 20 (MSFLKKSLLLILFLGLVSLS). The propeptide occupies 21 to 45 (VCKEEKRETEEENENEENHEEGSEM). The interval 24–197 (EEKRETEEEN…GYPSGEAKKM (174 aa)) is disordered. A compositionally biased stretch (acidic residues) spans 30–39 (EEENENEENH). Basic and acidic residues predominate over residues 40–62 (EEGSEMKRYMFHLMDGEAKKRDS). At Met49 the chain carries D-methionine. Position 54 is an aspartic acid 1-amide (Asp54). A propeptide spanning residues 56-77 (EAKKRDSEENEIEENHEEGSEM) is cleaved from the precursor. At Ala81 the chain carries D-alanine (Ala). Residue Ser86 is modified to Serine amide. Residues 88–97 (EAKKIKRVSE) are compositionally biased toward basic and acidic residues. A propeptide spanning residues 88–112 (EAKKIKRVSEEENENEENHEEGSEM) is cleaved from the precursor. The residue at position 116 (Ala116) is a D-alanine (Ala). A Serine amide modification is found at Ser121. Residues 123-132 (EAKKIKRESE) show a composition bias toward basic and acidic residues. A propeptide spanning residues 123–147 (EAKKIKRESEEEKEIEENHEEGSEM) is cleaved from the precursor. Ala151 bears the D-alanine (Ala) mark. Serine amide is present on Ser156. A propeptide spanning residues 158–182 (EAKKIKRESEEENENEENHEEGSEM) is cleaved from the precursor. The span at 167–176 (EEENENEENH) shows a compositional bias: acidic residues. D-alanine (Ala) is present on Ala186. Serine amide is present on Ser191. The propeptide occupies 193-197 (EAKKM).

Belongs to the frog skin active peptide (FSAP) family. Dermorphin subfamily. In terms of tissue distribution, expressed by the skin glands.

Its subcellular location is the secreted. In terms of biological role, dermorphin has a very potent opiate-like activity. It has high affinity and selectivity for mu-type opioid receptors. Deltorphin has a very potent opiate-like activity. It has high affinity and selectivity for delta-type opioid receptors. The polypeptide is Dermorphin-1 (Phyllomedusa sauvagei (Sauvage's leaf frog)).